We begin with the raw amino-acid sequence, 556 residues long: 2-succinyl-5-enolpyruvyl-6-hydroxy-3-cyclohexene-1-carboxylate synthase (556 aa).

It belongs to the TPP enzyme family. MenD subfamily. In terms of assembly, homodimer. Mg(2+) is required as a cofactor. It depends on Mn(2+) as a cofactor. The cofactor is thiamine diphosphate.

It carries out the reaction isochorismate + 2-oxoglutarate + H(+) = 5-enolpyruvoyl-6-hydroxy-2-succinyl-cyclohex-3-ene-1-carboxylate + CO2. It functions in the pathway quinol/quinone metabolism; 1,4-dihydroxy-2-naphthoate biosynthesis; 1,4-dihydroxy-2-naphthoate from chorismate: step 2/7. The protein operates within quinol/quinone metabolism; menaquinone biosynthesis. Catalyzes the thiamine diphosphate-dependent decarboxylation of 2-oxoglutarate and the subsequent addition of the resulting succinic semialdehyde-thiamine pyrophosphate anion to isochorismate to yield 2-succinyl-5-enolpyruvyl-6-hydroxy-3-cyclohexene-1-carboxylate (SEPHCHC). The polypeptide is 2-succinyl-5-enolpyruvyl-6-hydroxy-3-cyclohexene-1-carboxylate synthase (Salmonella paratyphi A (strain AKU_12601)).